We begin with the raw amino-acid sequence, 61 residues long: Large ribosomal subunit protein bL32 (61 aa).

The span at 1–19 shows a compositional bias: basic residues; it reads MAHPKRRQSKTRTAKRRTH. Residues 1–20 are disordered; the sequence is MAHPKRRQSKTRTAKRRTHD.

It belongs to the bacterial ribosomal protein bL32 family.

The polypeptide is Large ribosomal subunit protein bL32 (Bacteroides fragilis (strain YCH46)).